The following is a 151-amino-acid chain: Sperm surface protein Sp17 (151 aa).

Disordered stretches follow at residues 56–115 (DPAE…EKEE) and 127–151 (GHIAREEAKKMKTNSLQNEEKEENK). A compositionally biased stretch (basic and acidic residues) spans 62 to 98 (SKVEDRFYNNHAFEEQEPPEKSDPKQEESQISGKEEE). The 30-residue stretch at 114–143 (EEVAAVKIQAAFRGHIAREEAKKMKTNSLQ) folds into the IQ domain.

Homodimer. May interact with ROPN1. Testis and sperm specific.

Its subcellular location is the membrane. Sperm surface zona pellucida binding protein. Helps to bind spermatozoa to the zona pellucida with high affinity. Might function in binding zona pellucida and carbohydrates. The protein is Sperm surface protein Sp17 (SPA17) of Homo sapiens (Human).